Reading from the N-terminus, the 258-residue chain is Retron Ec83 putative HNH endonuclease (258 aa).

Functionally, putative HNH endonuclease component of antiviral defense system retron Ec83, composed of a non-coding RNA (ncRNA), a reverse transcriptase (RT), a probable ATPase and this protein. Expression of retron Ec78 confers protection against bacteriophage T2, T4 and T6. At multiplicity of infection (MOI) of 0.02 cultures slow growth when infected with T4 but do not collapse, at MOI 2 cultures enter growth stasis. This chain is Retron Ec83 putative HNH endonuclease, found in Escherichia coli.